Reading from the N-terminus, the 447-residue chain is UPF0328 protein ECU10_1870 (447 aa).

2 stretches are compositionally biased toward basic and acidic residues: residues 1-10 (MPSDHPDFRS) and 64-84 (HTEG…HTET). Disordered regions lie at residues 1–103 (MPSD…TATP) and 147–173 (VKSQ…NPRI). Residues 92–103 (CPPPHPGPTATP) are compositionally biased toward pro residues.

It belongs to the UPF0328 family.

This Encephalitozoon cuniculi (strain GB-M1) (Microsporidian parasite) protein is UPF0328 protein ECU10_1870.